Consider the following 266-residue polypeptide: MGAGLVSACLPISYVLLVHLFDRNGTDRNDPESVKRRFKGALLSNFVSIVVTAFYLRDYTDSPMLEMGVRWDNIGQSITYPFILMNAFYLGQFVMMQIDRTLWHYFDWYEWKLCFNSWVWRRDIIVGPITEEIVFRACSSTLMAHVYGPTMTILLNPIPFAASHFHHIWDDQRRGYSLAHSILQRGFQFCYTYLFGAFATWLQLTTRHAIVPIIAHAFCNAQGLPLWLEIPNYPKRRDRLTLYAAYSVGFAAFVHLLYTRNGMPTP.

3 consecutive transmembrane segments (helical) span residues 1–21 (MGAG…VHLF), 42–59 (LLSN…LRDY), and 78–98 (ITYP…MMQI). Catalysis depends on proton donor/acceptor residues glutamate 131 and histidine 164. Transmembrane regions (helical) follow at residues 186 to 206 (GFQF…QLTT), 210 to 230 (IVPI…WLEI), and 239 to 259 (RLTL…LLYT).

This sequence belongs to the peptidase U48 family.

The protein localises to the endoplasmic reticulum membrane. The protein resides in the membrane. The catalysed reaction is Hydrolyzes the peptide bond -P2-(S-farnesyl or geranylgeranyl)C-P1'-P2'-P3'-COOH where P1' and P2' are amino acids with aliphatic sidechains and P3' is any C-terminal residue.. Functionally, protease involved in the processing of a variety of prenylated proteins containing the C-terminal CAAX motif, where C is a cysteine modified with an isoprenoid lipid, A is an aliphatic amino acid and X is any C-terminal amino acid. Proteolytically removes the C-terminal three residues of farnesylated and geranylated proteins, leaving the prenylated cysteine as the new C-terminus. In Caenorhabditis elegans, this protein is CAAX prenyl protease 2.